Reading from the N-terminus, the 607-residue chain is V-type proton ATPase catalytic subunit A (607 aa).

251–258 (GAFGCGKT) is a binding site for ATP.

This sequence belongs to the ATPase alpha/beta chains family. As to quaternary structure, V-ATPase is a heteromultimeric enzyme composed of a peripheral catalytic V1 complex (components A to H) attached to an integral membrane V0 proton pore complex (components: a, c, c', c'', d, e, f and VOA1).

It localises to the vacuole membrane. The enzyme catalyses ATP + H2O + 4 H(+)(in) = ADP + phosphate + 5 H(+)(out). Functionally, catalytic subunit of the V1 complex of vacuolar(H+)-ATPase (V-ATPase), a multisubunit enzyme composed of a peripheral complex (V1) that hydrolyzes ATP and a membrane integral complex (V0) that translocates protons. V-ATPase is responsible for acidifying and maintaining the pH of intracellular compartments. The protein is V-type proton ATPase catalytic subunit A (VMA1) of Encephalitozoon cuniculi (strain GB-M1) (Microsporidian parasite).